The primary structure comprises 208 residues: uncharacterized protein (208 aa).

A J domain is found at 4–71 (DYYAILNITP…SRRAQYDRES (68 aa)). Positions 67–100 (YDRESASSSAKPRQSFFSRTNPQPQSQSQQGGPS) are disordered. A compositionally biased stretch (polar residues) spans 72–87 (ASSSAKPRQSFFSRTN). Residues 88–100 (PQPQSQSQQGGPS) are compositionally biased toward low complexity. A helical transmembrane segment spans residues 127-147 (GIANAFWTIVGTLAGAALGFI).

The protein belongs to the DnaJ family.

It is found in the endoplasmic reticulum membrane. This is an uncharacterized protein from Schizosaccharomyces pombe (strain 972 / ATCC 24843) (Fission yeast).